Reading from the N-terminus, the 599-residue chain is Leishmanolysin (599 aa).

The signal sequence occupies residues 1–39 (MSVDSSSTHRHRSVAARLVRLAAAGAAVIAAVGTAAAWA). A propeptide spans 40 to 97 (HAGAVQHRCIHDAMQARVRQSVARHHTAPGAVSAVGLPYVTLDTAAAADRRPGSAPTV) (activation peptide). Intrachain disulfides connect Cys122–Cys139 and Cys188–Cys227. His261 contributes to the Zn(2+) binding site. The active site involves Glu262. His265 provides a ligand contact to Zn(2+). A glycan (N-linked (GlcNAc...) asparagine) is linked at Asn297. Disulfide bonds link Cys311–Cys383, Cys390–Cys452, Cys403–Cys422, Cys412–Cys486, Cys463–Cys507, Cys512–Cys562, and Cys532–Cys555. His331 contacts Zn(2+). Asn394 is a glycosylation site (N-linked (GlcNAc...) asparagine). Asn574 carries GPI-anchor amidated asparagine lipidation. Residues 575–599 (AAAGRRGPRAAATALLVAALLAVAL) constitute a propeptide, removed in mature form.

It belongs to the peptidase M8 family. Requires Zn(2+) as cofactor.

It localises to the cell membrane. It carries out the reaction Preference for hydrophobic residues at P1 and P1' and basic residues at P2' and P3'. A model nonapeptide is cleaved at -Ala-Tyr-|-Leu-Lys-Lys-.. Has an integral role during the infection of macrophages in the mammalian host. The polypeptide is Leishmanolysin (gp63) (Leishmania chagasi).